The chain runs to 101 residues: Putative regulatory protein Csac_2087 (101 aa).

This sequence belongs to the RemA family.

The chain is Putative regulatory protein Csac_2087 from Caldicellulosiruptor saccharolyticus (strain ATCC 43494 / DSM 8903 / Tp8T 6331).